The sequence spans 376 residues: WD repeat-containing protein wdr-5.1 (376 aa).

Residues 1 to 24 (MDTSENAASAAEQQPTQQIDQLTV) show a composition bias toward polar residues. The disordered stretch occupies residues 1–70 (MDTSENAASA…TPNPNAAGAS (70 aa)). Over residues 25 to 53 (PNAPDGGSSAPAPSTSPNSISPSNPTGTP) the composition is skewed to low complexity. WD repeat units lie at residues 85–115 (GHTKSISSAKFSPCGKYLGTSSADKTVKIWN), 127–157 (GHKLGVNDIAWSSDSRCVVSASDDKTLKIFE), 169–199 (GHNNYVFCCNFNPQSSLVVSGSFDESVRIWD), 211–241 (AHSDPVSAVSFNRDGSLIASGSYDGLVRIWD), 254–284 (DENPPVAFVKFSPNGKYILASNLDSTLKLWD), 296–329 (GHENSKYCIFANFSVTGGKWIISGSEDCKIYIWN), and 341–373 (GHTQPVLASDCHPVQNIIASGALEPDNKIHIWR).

This sequence belongs to the WD repeat WDR5/wds family. Component of the SET2 complex (also known as the SET1/COMPASS complex), which contains at least set-2, swd-2.1, cfp-1, rbbp-5, wdr-5.1, dpy-30 and ash-2. Within the complex, interacts with cfp-1, ash-2, dpy-30 and hda-1. Interacts with histone H3 both unmethylated and methylated at 'Lys-4'. Interacts with jmjd-3.1, ceh-6, sox-2, sem-4 and egl-27. Interacts with set-2. Enriched in the germline. Detected in all nuclei of the embryo. In larvae, expression is detected in the nuclei of seam cells, somatic gonad precursor cells Z1 and Z4, vulval precursor cells, distal tip cells, hypodermal cells, intestinal and muscle cells. Also detected in the neurons from the ventral nerve cord, head and tail region. Expressed in the head and tail region, intestinal cells, muscle cells, cells of the vulva, spermatheca and sheath cells in adults.

It localises to the nucleus. Its function is as follows. Contributes to histone modification. May position the N-terminus of histone H3 for efficient trimethylation at 'Lys-4'. Required for di- and trimethylation, particularly for the trimethylation at 'Lys-4' of histone H3. Not required for demethylation of histone H3 'Lys-27'. H3 'Lys-4' methylation represents a specific tag for epigenetic transcriptional activation, germline establishment, maintenance and function. Implicated in the epigenetic inheritance of lifespan over several generations. Acts in the germline to limit the longevity of the soma, probably by regulating a lipid metabolism pathway that signals from the germline to the intestine, thereby preventing accumulation of mono-unsaturated fatty acids. Required for RNA interference with probable antagonistic role against hpl-2 function. Plays a role in vulval cell fate specification by acting in the synthetic multivulva pathway independent of set-2. Sex determining protein required in the germline to promote the spermatogenesis to oogenesis switch during the late larval stages of development. Acts with the sex determining factor tra-1, and redundantly with wdr-5.2, to regulate fog-3 expression, which in turn determines germ cell fate. Cooperates with jmjd-3.1, egl-27 and unc-3 to ensure robust transdifferentiation of the Y rectal cell to the PDA motor neuron during larval development. This chain is WD repeat-containing protein wdr-5.1 (wdr-5.1), found in Caenorhabditis elegans.